We begin with the raw amino-acid sequence, 487 residues long: Glutamyl-tRNA(Gln) amidotransferase subunit A (487 aa).

Catalysis depends on charge relay system residues Lys82 and Ser157. The active-site Acyl-ester intermediate is Ser181.

This sequence belongs to the amidase family. GatA subfamily. Heterotrimer of A, B and C subunits.

The enzyme catalyses L-glutamyl-tRNA(Gln) + L-glutamine + ATP + H2O = L-glutaminyl-tRNA(Gln) + L-glutamate + ADP + phosphate + H(+). Allows the formation of correctly charged Gln-tRNA(Gln) through the transamidation of misacylated Glu-tRNA(Gln) in organisms which lack glutaminyl-tRNA synthetase. The reaction takes place in the presence of glutamine and ATP through an activated gamma-phospho-Glu-tRNA(Gln). The protein is Glutamyl-tRNA(Gln) amidotransferase subunit A of Fusobacterium nucleatum subsp. nucleatum (strain ATCC 25586 / DSM 15643 / BCRC 10681 / CIP 101130 / JCM 8532 / KCTC 2640 / LMG 13131 / VPI 4355).